The following is a 249-amino-acid chain: Protection of telomeres protein poz1 (249 aa).

Interacts with pot1, rap1 and tpz1.

The protein localises to the cytoplasm. It localises to the nucleus. It is found in the chromosome. Its subcellular location is the telomere. Functionally, telomeric DNA-binding protein that negatively regulates telomerase and telomere length. The polypeptide is Protection of telomeres protein poz1 (poz1) (Schizosaccharomyces pombe (strain 972 / ATCC 24843) (Fission yeast)).